Here is a 234-residue protein sequence, read N- to C-terminus: Large ribosomal subunit protein uL1 (234 aa).

This sequence belongs to the universal ribosomal protein uL1 family. Part of the 50S ribosomal subunit.

In terms of biological role, binds directly to 23S rRNA. The L1 stalk is quite mobile in the ribosome, and is involved in E site tRNA release. Protein L1 is also a translational repressor protein, it controls the translation of the L11 operon by binding to its mRNA. This is Large ribosomal subunit protein uL1 from Corynebacterium aurimucosum (strain ATCC 700975 / DSM 44827 / CIP 107346 / CN-1) (Corynebacterium nigricans).